A 294-amino-acid polypeptide reads, in one-letter code: NAD kinase (294 aa).

The active-site Proton acceptor is aspartate 74. NAD(+) contacts are provided by residues 74 to 75, 148 to 149, histidine 159, arginine 176, aspartate 178, and 189 to 194; these read DG, NE, and TAYSLS.

Belongs to the NAD kinase family. The cofactor is a divalent metal cation.

It localises to the cytoplasm. The enzyme catalyses NAD(+) + ATP = ADP + NADP(+) + H(+). In terms of biological role, involved in the regulation of the intracellular balance of NAD and NADP, and is a key enzyme in the biosynthesis of NADP. Catalyzes specifically the phosphorylation on 2'-hydroxyl of the adenosine moiety of NAD to yield NADP. The chain is NAD kinase from Pseudoalteromonas translucida (strain TAC 125).